The chain runs to 186 residues: uncharacterized protein (186 aa).

The N-terminal stretch at 1-18 is a signal peptide; it reads MNKFLFAAALIVSGLLVG. Cysteine 19 carries the N-palmitoyl cysteine lipid modification. Cysteine 19 is lipidated: S-diacylglycerol cysteine.

Its subcellular location is the cell membrane. This is an uncharacterized protein from Escherichia coli (strain K12).